Reading from the N-terminus, the 89-residue chain is Large ribosomal subunit protein bL27 (89 aa).

The disordered stretch occupies residues 1 to 22 (MAHKKAGGSSRNGRDSESKRLG).

Belongs to the bacterial ribosomal protein bL27 family.

The chain is Large ribosomal subunit protein bL27 from Bartonella tribocorum (strain CIP 105476 / IBS 506).